Reading from the N-terminus, the 225-residue chain is Uracil-DNA glycosylase (225 aa).

Residue D65 is the Proton acceptor of the active site.

Belongs to the uracil-DNA glycosylase (UDG) superfamily. UNG family.

The protein localises to the cytoplasm. The catalysed reaction is Hydrolyzes single-stranded DNA or mismatched double-stranded DNA and polynucleotides, releasing free uracil.. Its function is as follows. Excises uracil residues from the DNA which can arise as a result of misincorporation of dUMP residues by DNA polymerase or due to deamination of cytosine. The sequence is that of Uracil-DNA glycosylase from Bacillus cereus (strain AH820).